We begin with the raw amino-acid sequence, 332 residues long: Beta-1,3-N-acetylglucosaminyltransferase radical fringe (332 aa).

At 1–6 the chain is on the cytoplasmic side; that stretch reads MSRARR. A helical; Signal-anchor for type II membrane protein transmembrane segment spans residues 7–29; sequence VLCRACLALAAVLAVLLLLPLPL. The Lumenal segment spans residues 30-332; the sequence is PLPLPRAPAP…MKNRVEGAFQ (303 aa). Position 75 (R75) interacts with substrate. N114 carries N-linked (GlcNAc...) asparagine glycosylation. Cystine bridges form between C115–C126 and C144–C208. Residue D148 coordinates substrate. A Mn(2+)-binding site is contributed by D149. Residue D238 is part of the active site. Residue H262 participates in Mn(2+) binding. C312 and C321 are oxidised to a cystine.

It belongs to the glycosyltransferase 31 family. Mn(2+) serves as cofactor. In terms of tissue distribution, detected in all the examined tissues (12.5 dpc). High expression found in adult brain.

Its subcellular location is the golgi apparatus membrane. The enzyme catalyses 3-O-(alpha-L-fucosyl)-L-threonyl-[EGF-like domain protein] + UDP-N-acetyl-alpha-D-glucosamine = 3-O-(N-acetyl-beta-D-glucosaminyl-(1-&gt;3)-alpha-L-fucosyl)-L-threonyl-[EGF-like domain protein] + UDP + H(+). It catalyses the reaction 3-O-(alpha-L-fucosyl)-L-seryl-[EGF-like domain protein] + UDP-N-acetyl-alpha-D-glucosamine = 3-O-(N-acetyl-beta-D-glucosaminyl-(1-&gt;3)-alpha-L-fucosyl)-L-seryl-[EGF-like domain protein] + UDP + H(+). Functionally, glycosyltransferase that initiates the elongation of O-linked fucose residues attached to EGF-like repeats in the extracellular domain of Notch molecules. Modulates NOTCH1 activity by modifying O-fucose residues at specific EGF-like domains resulting in enhancement of NOTCH1 activation by DLL1 and JAG1. May be involved in limb formation and in neurogenesis. The sequence is that of Beta-1,3-N-acetylglucosaminyltransferase radical fringe from Mus musculus (Mouse).